A 210-amino-acid polypeptide reads, in one-letter code: MANVELSEGTIQVRGQSLFFREARPGNGQAVRFSVLLLHGIRFSSETWQNLGTLHRLAEAGYRAVAIDLPGLGRSKEAAAPAPIGELAPGSFLAAVVDALELGSLVVISPSLSGMYALPFLVAPESQLRGYVPVAPICTDKINAADYARVKTPTLIVYGDQDPMGSSSFQHLKQLPNHRVLVMEGAGHPCYLDKPDEWHTGLLDFLQELA.

Ser91 carries the post-translational modification Phosphoserine. Residues Ser111, Asp162, and His188 each act as charge relay system in the active site.

It belongs to the AB hydrolase superfamily. ABHD14 family. As to quaternary structure, may interact with TAF1.

Its subcellular location is the cytoplasm. The protein localises to the nucleus. It carries out the reaction L-lysyl-[protein] + acetyl-CoA = N(6)-acetyl-L-lysyl-[protein] + CoA + H(+). Its function is as follows. Acts as an atypical protein-lysine deacetylase in vitro. Catalyzes the deacetylation of lysine residues using CoA as substrate, generating acetyl-CoA and the free amine of protein-lysine residues. Additional experiments are however required to confirm the protein-lysine deacetylase activity in vivo. Has hydrolase activity towards various surrogate p-nitrophenyl (pNp) substrates, such as pNp-butyrate, pNp-acetate and pNp-octanoate in vitro, with a strong preference for pNp-acetate. May activate transcription. This Rattus norvegicus (Rat) protein is Putative protein-lysine deacylase ABHD14B.